Here is a 423-residue protein sequence, read N- to C-terminus: F-box/LRR-repeat protein 2 (423 aa).

Residues 9–55 (GRINKKLPKELLLRIFSFLDIVTLCRCAQISKAWNILALDGSNWQRI) enclose the F-box domain. LRR repeat units follow at residues 61–87 (QTDVEGRVVENISKRCGGFLRKLSLRG), 88–113 (CIGVGDSSLKTFAQNCRNIEHLNLNG), 114–139 (CTKITDSTCYSLSRFCSKLKHLDLTS), 140–165 (CVSITNSSLKGISEGCRNLEYLNLSW), 166–191 (CDQITKDGIEALVRGCRGLKALLLRG), 192–217 (CTQLEDEALKHIQNYCHELVSLNLQS), 218–243 (CSRITDEGVVQICRGCHRLQALCLSG), 244–269 (CSNLTDASLTALGLNCPRLQILEAAR), 270–295 (CSHLTDAGFTLLARNCHELEKMDLEE), 296–321 (CILITDSTLIQLSIHCPKLQALSLSH), 322–350 (CELITDDGILHLSNSTCGHERLRVLELDN), 351–375 (CLLITDVALEHLENCRGLERLELYD), and 376–401 (CQQVTRAGIKRMRAQLPHVKVHAYFA). Residues 80–90 (LRKLSLRGCIG) form an interaction with Calmodulin region. Residue lysine 201 forms a Glycyl lysine isopeptide (Lys-Gly) (interchain with G-Cter in ubiquitin) linkage. Threonine 404 is subject to Phosphothreonine. The S-geranylgeranyl cysteine moiety is linked to residue cysteine 420. A CAAX motif motif is present at residues 420–423 (CVIL).

In terms of assembly, part of the SCF (SKP1-CUL1-F-box) E3 ubiquitin-protein ligase complex SCF(FBXL2) composed of CUL1, SKP1, RBX1 and FBXL2. Interacts with calmodulin; may antagonize substrate ubiquitination by SCF(FBXL2). May interact with PIK3R1. Interacts with PTPN13. In terms of processing, phosphorylated by GSK-beta (GSK3B), promoting recognition by FBXO3, leading to its ubiquitination by the SCF(FBXO3) complex. Post-translationally, ubiquitinated at Lys-201 by the SCF(FBXO3) complex in response to lipopolysaccharide (LPS), leading to its degradation by the proteasome.

The protein resides in the membrane. It participates in protein modification; protein ubiquitination. Its function is as follows. Calcium-activated substrate recognition component of the SCF (SKP1-cullin-F-box protein) E3 ubiquitin-protein ligase complex, SCF(FBXL2), which mediates the ubiquitination and subsequent proteasomal degradation of target proteins. Unlike many F-box proteins, FBXL2 does not seem to target phosphodegron within its substrates but rather calmodulin-binding motifs and is thereby antagonized by calmodulin. This is the case for the cyclins CCND2 and CCND3 which polyubiquitination and subsequent degradation are inhibited by calmodulin. Through CCND2 and CCND3 degradation induces cell-cycle arrest in G(0). SCF(FBXL2) also mediates PIK3R2 ubiquitination and proteasomal degradation thereby regulating phosphatidylinositol 3-kinase signaling and autophagy. PCYT1A monoubiquitination by SCF(FBXL2) and subsequent degradation regulates synthesis of phosphatidylcholine, which is utilized for formation of membranes and of pulmonary surfactant. The SCF(FBXL2) complex acts as a regulator of inflammation by mediating ubiquitination and degradation of TRAF proteins (TRAF1, TRAF2, TRAF3, TRAF4, TRAF5 and TRAF6). The SCF(FBXL2) complex acts as a negative regulator of the NLRP3 inflammasome by mediating ubiquitination and degradation of NLRP3. The chain is F-box/LRR-repeat protein 2 from Pongo abelii (Sumatran orangutan).